A 141-amino-acid chain; its full sequence is Cystatin (141 aa).

The first 26 residues, Met-1–Met-26, serve as a signal peptide directing secretion. The 101-residue stretch at Gly-29–Trp-129 folds into the Cystatin domain. Positions Gln-73 to Gly-77 match the Secondary area of contact motif. Intrachain disulfides connect Cys-91-Cys-107 and Cys-120-Cys-140.

The protein belongs to the cystatin family. Expressed by the venom gland at an extremely low level (at protein level).

It is found in the secreted. Its function is as follows. Inhibits various C1 cysteine proteases including cathepsin L, papain and cathepsin B. This protein has no toxic activity and its function in the venom is unknown. It may play a role as a housekeeping or regulatory protein. This is Cystatin from Oxyuranus microlepidotus (Inland taipan).